Consider the following 299-residue polypeptide: Acetylglutamate kinase (299 aa).

Residues 72–73, Arg94, and Asn196 contribute to the substrate site; that span reads GG.

Belongs to the acetylglutamate kinase family. ArgB subfamily.

It localises to the cytoplasm. It carries out the reaction N-acetyl-L-glutamate + ATP = N-acetyl-L-glutamyl 5-phosphate + ADP. Its pathway is amino-acid biosynthesis; L-arginine biosynthesis; N(2)-acetyl-L-ornithine from L-glutamate: step 2/4. In terms of biological role, catalyzes the ATP-dependent phosphorylation of N-acetyl-L-glutamate. This Burkholderia cenocepacia (strain ATCC BAA-245 / DSM 16553 / LMG 16656 / NCTC 13227 / J2315 / CF5610) (Burkholderia cepacia (strain J2315)) protein is Acetylglutamate kinase.